Here is a 257-residue protein sequence, read N- to C-terminus: Receptor expression-enhancing protein 4 (257 aa).

2 helical membrane-spanning segments follow: residues 1 to 21 (MVSW…CPAY) and 42 to 62 (WIVF…ISWF). Phosphoserine occurs at positions 152 and 194. The tract at residues 183 to 257 (PIGYRAGGLQ…KKTVPSDVDS (75 aa)) is disordered. Phosphothreonine is present on T196. The residue at position 202 (S202) is a Phosphoserine. T250 is modified (phosphothreonine). A Phosphoserine modification is found at S253.

Belongs to the DP1 family. Expressed in circumvallate papillae and testis.

The protein resides in the endoplasmic reticulum membrane. Its function is as follows. Microtubule-binding protein required to ensure proper cell division and nuclear envelope reassembly by sequestering the endoplasmic reticulum away from chromosomes during mitosis. Probably acts by clearing the endoplasmic reticulum membrane from metaphase chromosomes. The protein is Receptor expression-enhancing protein 4 (REEP4) of Homo sapiens (Human).